A 1902-amino-acid chain; its full sequence is Plexin-B3 (1902 aa).

Positions 1–36 (MLTDFLQAPVMAPWSPFSLHLLLLFLPLLPLTRVHR) are cleaved as a signal peptide. In terms of domain architecture, Sema spans 37–461 (FSVPNTSFNH…TAQQVDRILV (425 aa)). Residues 37–1245 (FSVPNTSFNH…MMSTFPVEAQ (1209 aa)) are Extracellular-facing. Asparagine 41 is a glycosylation site (N-linked (GlcNAc...) asparagine). Disulfide bonds link cysteine 88–cysteine 97 and cysteine 122–cysteine 130. Asparagine 221 carries an N-linked (GlcNAc...) asparagine glycan. Disulfide bonds link cysteine 257–cysteine 360, cysteine 273–cysteine 305, and cysteine 323–cysteine 347. Residues 353 to 372 (DSPESYPCGDEHTPSPIAGR) are disordered. 2 N-linked (GlcNAc...) asparagine glycosylation sites follow: asparagine 416 and asparagine 469. The 53-residue stretch at 463–515 (ACPQFPNCTTCLQARDPLCGWCILQGRCTRRGECGRAAQPNHWLWSYEDNHCP) folds into the PSI 1 domain. Cystine bridges form between cysteine 464–cysteine 481, cysteine 470–cysteine 514, cysteine 473–cysteine 490, cysteine 484–cysteine 496, and cysteine 551–cysteine 569. PSI domains lie at 609-671 (DCSA…EACP) and 776-822 (DCAM…QLCP). Residues asparagine 791, asparagine 889, asparagine 910, asparagine 946, asparagine 1090, and asparagine 1207 are each glycosylated (N-linked (GlcNAc...) asparagine). IPT/TIG domains follow at residues 823 to 914 (IPSI…FTYQ), 915 to 1001 (DPVL…FRYT), 1003 to 1134 (NPQL…FLYQ), and 1154 to 1221 (KPGH…QMGN). A helical transmembrane segment spans residues 1246 to 1266 (LGLGMGAAVLIAAVLLLTLMY). At 1267-1902 (RHKSKKALRD…ALVEYKVTDL (636 aa)) the chain is on the cytoplasmic side.

The protein belongs to the plexin family. As to quaternary structure, binds MET and MST1R. Interacts with RIT2/RIN. May form homodimers (via Sema domain). Interacts (via cytoplasmic domain) with FSCN1, ARHGDIA and RAC1. In terms of tissue distribution, expressed in brain (at protein level). In cerebellum, strongest expression detected in Purkinje and granular cells. Detected at very low levels in several fetal tissues, including dorsal root ganglia (DRG), heart, lung, optic bulb, brain and liver.

It localises to the cell membrane. Receptor for SEMA5A that plays a role in axon guidance, invasive growth and cell migration. Stimulates neurite outgrowth and mediates Ca(2+)/Mg(2+)-dependent cell aggregation. In glioma cells, SEMA5A stimulation of PLXNB3 results in the disassembly of F-actin stress fibers, disruption of focal adhesions and cellular collapse as well as inhibition of cell migration and invasion through ARHGDIA-mediated inactivation of RAC1. Seem to be non-essential for normal development and function of the central nervous system. This is Plexin-B3 (Plxnb3) from Mus musculus (Mouse).